We begin with the raw amino-acid sequence, 721 residues long: Polyribonucleotide nucleotidyltransferase (721 aa).

Mg(2+)-binding residues include Asp490 and Asp496. The KH domain occupies 557–618; that stretch reads PRILTLKINP…EAVRQKIEGL (62 aa). An S1 motif domain is found at 625–693; sequence GEEYEGTVVK…DRGKIDLIRP (69 aa). The interval 696-721 is disordered; that stretch reads EGKIAPREPRAARAGGDRGGRPPRRE.

It belongs to the polyribonucleotide nucleotidyltransferase family. Mg(2+) serves as cofactor.

The protein resides in the cytoplasm. The enzyme catalyses RNA(n+1) + phosphate = RNA(n) + a ribonucleoside 5'-diphosphate. Its function is as follows. Involved in mRNA degradation. Catalyzes the phosphorolysis of single-stranded polyribonucleotides processively in the 3'- to 5'-direction. This chain is Polyribonucleotide nucleotidyltransferase, found in Deinococcus geothermalis (strain DSM 11300 / CIP 105573 / AG-3a).